Reading from the N-terminus, the 164-residue chain is HTH-type transcriptional regulator IscR (164 aa).

Residues 2–131 enclose the HTH rrf2-type domain; the sequence is RLTSKGRYAV…NNITLAELVN (130 aa). Positions 28–51 form a DNA-binding region, H-T-H motif; that stretch reads LADISERQGISLSYLEQLFSRLRK. [2Fe-2S] cluster contacts are provided by C92, C98, and C104. Residues 143–164 are disordered; the sequence is NNDTRRTANGRPQETINVNLRA. Positions 152–164 are enriched in polar residues; it reads GRPQETINVNLRA.

[2Fe-2S] cluster is required as a cofactor.

Regulates the transcription of several operons and genes involved in the biogenesis of Fe-S clusters and Fe-S-containing proteins. The sequence is that of HTH-type transcriptional regulator IscR from Yersinia pseudotuberculosis serotype O:1b (strain IP 31758).